The sequence spans 387 residues: 3-ketoacyl-CoA thiolase (387 aa).

Cys91 acts as the Acyl-thioester intermediate in catalysis. Residues His343 and Cys373 each act as proton acceptor in the active site.

The protein belongs to the thiolase-like superfamily. Thiolase family. Heterotetramer of two alpha chains (FadB) and two beta chains (FadA).

The protein resides in the cytoplasm. The enzyme catalyses an acyl-CoA + acetyl-CoA = a 3-oxoacyl-CoA + CoA. It participates in lipid metabolism; fatty acid beta-oxidation. Functionally, catalyzes the final step of fatty acid oxidation in which acetyl-CoA is released and the CoA ester of a fatty acid two carbons shorter is formed. The chain is 3-ketoacyl-CoA thiolase from Shewanella denitrificans (strain OS217 / ATCC BAA-1090 / DSM 15013).